Here is a 62-residue protein sequence, read N- to C-terminus: Conotoxin Pl168 (62 aa).

The signal sequence occupies residues 1–21 (MGMRMMFTVFLLVVLATTVVS). The propeptide occupies 22–40 (FTLDRASDGANAAADLVAR). Cystine bridges form between C46-C52 and C47-C61.

The protein belongs to the conotoxin A superfamily. In terms of processing, both Pro-53 and Pro-62 are not in cis/trans isomerization. As to expression, expressed by the venom duct.

The protein localises to the secreted. Functionally, probable neurotoxin with unknown target. Possibly targets ion channels. This chain is Conotoxin Pl168, found in Conus planorbis (Planorbis cone).